Here is a 232-residue protein sequence, read N- to C-terminus: Protein Mis18-alpha (232 aa).

A phosphoserine mark is found at S36, S39, and S40. Positions 79-177 (PLVFLCSGCR…SVEAIESYVL (99 aa)) constitute a Mis18 domain. Zn(2+) is bound by residues C84, C87, C140, and C143. K161 participates in a covalent cross-link: Glycyl lysine isopeptide (Lys-Gly) (interchain with G-Cter in SUMO2). A Phosphoserine modification is found at S232.

The protein belongs to the mis18 family. As to quaternary structure, homodimer, and heterodimer with OIP5/MIS18B. Identified in a complex containing MIS18A, OIP5/MIS18B, MIS18BP1, RBBP7 and RBBP4.

The protein localises to the nucleus. It localises to the chromosome. Its subcellular location is the centromere. Functionally, required for recruitment of CENPA to centromeres and normal chromosome segregation during mitosis. This Pan troglodytes (Chimpanzee) protein is Protein Mis18-alpha (MIS18A).